The following is a 249-amino-acid chain: GTP cyclohydrolase III (249 aa).

This sequence belongs to the archaeal-type GTP cyclohydrolase family.

It catalyses the reaction GTP + 3 H2O = 2-amino-5-formylamino-6-(5-phospho-D-ribosylamino)pyrimidin-4(3H)-one + 2 phosphate + 2 H(+). Catalyzes the formation of 2-amino-5-formylamino-6-ribofuranosylamino-4(3H)-pyrimidinone ribonucleotide monophosphate and inorganic phosphate from GTP. Also has an independent pyrophosphate phosphohydrolase activity. The chain is GTP cyclohydrolase III from Methanothermobacter thermautotrophicus (strain ATCC 29096 / DSM 1053 / JCM 10044 / NBRC 100330 / Delta H) (Methanobacterium thermoautotrophicum).